The chain runs to 767 residues: Two-component response regulator-like PRR73 (767 aa).

The tract at residues 1–64 is disordered; the sequence is MGSACEAGTD…EPQQTDEQKE (64 aa). The Response regulatory domain occupies 82–200; sequence RVLLVENDDS…ELKNLWQHVW (119 aa). Low complexity predominate over residues 205 to 214; sequence SSSGSGSESG. Disordered regions lie at residues 205–272, 312–388, 476–546, 646–701, and 727–767; these read SSSG…QSSW, RWLP…NEPT, ASNQ…RGKV, ANYS…SGSG, and NFGK…DEDR. Positions 238 to 252 are enriched in acidic residues; sequence DNEDDDDNDEDDDDL. Composition is skewed to polar residues over residues 263-272, 343-361, and 488-497; these read DNGSGTQSSW, RNSSMEYQSSPREMSVNPT, and CSPQDNSSEA. The segment covering 518–531 has biased composition (low complexity); sequence GSNGSSNNNDMGSS. Residues 532 to 543 show a composition bias toward polar residues; the sequence is TKNAITKPSSNR. Residues 689 to 700 are compositionally biased toward gly residues; it reads GAGGGNGSGSGS. The CCT domain occupies 712–754; the sequence is REAALNKFRQKRKVRNFGKKVRYQSRKRLAEQRPRIRGQFVRQ. The span at 727-738 shows a compositional bias: basic residues; sequence NFGKKVRYQSRK.

This sequence belongs to the ARR-like family.

It localises to the nucleus. In terms of biological role, controls photoperiodic flowering response. Seems to be one of the component of the circadian clock. Expression of several members of the ARR-like family is controlled by circadian rhythm. The particular coordinated sequential expression of PRR73, PRR37, PRR95, PRR59 and PPR1 result to circadian waves that may be at the basis of the endogenous circadian clock. This Oryza sativa subsp. indica (Rice) protein is Two-component response regulator-like PRR73 (PRR73).